The primary structure comprises 101 residues: MIPGELVTGDGEHELNAGRRTIELVVANTGDRPVQVGSHYHFHEVNDALSFDRAAARGFRLNIAAGTAVRFEPGQTRTVELVELAGARAVYGFQGKVMGPL.

This sequence belongs to the urease beta subunit family. Heterotrimer of UreA (gamma), UreB (beta) and UreC (alpha) subunits. Three heterotrimers associate to form the active enzyme.

The protein localises to the cytoplasm. It carries out the reaction urea + 2 H2O + H(+) = hydrogencarbonate + 2 NH4(+). The protein operates within nitrogen metabolism; urea degradation; CO(2) and NH(3) from urea (urease route): step 1/1. The sequence is that of Urease subunit beta from Burkholderia thailandensis (strain ATCC 700388 / DSM 13276 / CCUG 48851 / CIP 106301 / E264).